A 157-amino-acid chain; its full sequence is MNAEISKIYTDGACSGNPGPGGWGVVVYFGDGSVHEMGGAAAATTNNRMEMQAAIAALEFCQAAGHPPVILYTDSEYVKKGITEWLPGWKRKGWKTAQGKPVLNQDLWQVLDQLNTKSVNWQYVRGHSGNAGNERCDAIARAFAAGRQPELRQSRDL.

Residues 2–145 (NAEISKIYTD…CDAIARAFAA (144 aa)) enclose the RNase H type-1 domain. Mg(2+)-binding residues include D11, E50, D74, and D137.

This sequence belongs to the RNase H family. Monomer. Requires Mg(2+) as cofactor.

It is found in the cytoplasm. The enzyme catalyses Endonucleolytic cleavage to 5'-phosphomonoester.. In terms of biological role, endonuclease that specifically degrades the RNA of RNA-DNA hybrids. The polypeptide is Ribonuclease H (Cyanothece sp. (strain PCC 7425 / ATCC 29141)).